A 622-amino-acid polypeptide reads, in one-letter code: Apical membrane antigen 1 (622 aa).

An N-terminal signal peptide occupies residues 1-24 (MRKLYCVLLLSAFEFTYMINFGRG). Topologically, residues 25–546 (QNYWEHPYQN…EHKPTYDNMK (522 aa)) are extracellular. 5 disulfide bridges follow: Cys-149–Cys-302, Cys-217–Cys-247, Cys-263–Cys-275, Cys-320–Cys-418, and Cys-337–Cys-409. Asn-162 carries an N-linked (GlcNAc...) asparagine glycan. Residues Asn-286, Asn-371, Asn-421, Asn-422, and Asn-499 are each glycosylated (N-linked (GlcNAc...) asparagine). Intrachain disulfides connect Cys-443/Cys-502, Cys-490/Cys-507, and Cys-492/Cys-509. A helical membrane pass occupies residues 547–567 (IIIASSAAVAVLATILMVYLY). Topologically, residues 568–622 (KRKGNAEKYDKMDQPQDYGKSTSRNDEMLDPEASFWGEEKRASHTTPVLMEKPYY) are cytoplasmic. Residues 577–607 (DKMDQPQDYGKSTSRNDEMLDPEASFWGEEK) are disordered.

Belongs to the apicomplexan parasites AMA1 family.

It localises to the membrane. Involved in parasite invasion of erythrocytes. This Plasmodium falciparum (isolate Camp / Malaysia) protein is Apical membrane antigen 1 (AMA-1).